Consider the following 315-residue polypeptide: Replication factor C small subunit (315 aa).

Position 43–50 (43–50) interacts with ATP; sequence GSPGVGKT.

This sequence belongs to the activator 1 small subunits family. RfcS subfamily. As to quaternary structure, heteromultimer composed of small subunits (RfcS) and large subunits (RfcL).

In terms of biological role, part of the RFC clamp loader complex which loads the PCNA sliding clamp onto DNA. This Methanococcus maripaludis (strain C6 / ATCC BAA-1332) protein is Replication factor C small subunit.